The chain runs to 247 residues: Flavin-dependent thymidylate synthase (247 aa).

In terms of domain architecture, ThyX spans 1-237 (MDVKLLEATD…PKTFEYYEQE (237 aa)). DUMP contacts are provided by residues 85–88 (QITR), 98–100 (SMR), and R176. 88–90 (RHR) provides a ligand contact to FAD. A ThyX motif motif is present at residues 88 to 98 (RHRHVSFDVQS). Residues 192 to 194 (NAR) and H198 each bind FAD. Position 203 (R203) interacts with dUMP. R203 serves as the catalytic Involved in ionization of N3 of dUMP, leading to its activation.

Belongs to the thymidylate synthase ThyX family. In terms of assembly, homotetramer. FAD serves as cofactor.

The enzyme catalyses dUMP + (6R)-5,10-methylene-5,6,7,8-tetrahydrofolate + NADPH + H(+) = dTMP + (6S)-5,6,7,8-tetrahydrofolate + NADP(+). It functions in the pathway pyrimidine metabolism; dTTP biosynthesis. Functionally, catalyzes the reductive methylation of 2'-deoxyuridine-5'-monophosphate (dUMP) to 2'-deoxythymidine-5'-monophosphate (dTMP) while utilizing 5,10-methylenetetrahydrofolate (mTHF) as the methyl donor, and NADPH and FADH(2) as the reductant. The chain is Flavin-dependent thymidylate synthase from Haloarcula marismortui (strain ATCC 43049 / DSM 3752 / JCM 8966 / VKM B-1809) (Halobacterium marismortui).